We begin with the raw amino-acid sequence, 340 residues long: Ferrochelatase (340 aa).

Fe cation contacts are provided by His189 and Glu292.

The protein belongs to the ferrochelatase family.

It localises to the cytoplasm. The enzyme catalyses heme b + 2 H(+) = protoporphyrin IX + Fe(2+). The protein operates within porphyrin-containing compound metabolism; protoheme biosynthesis; protoheme from protoporphyrin-IX: step 1/1. Functionally, catalyzes the ferrous insertion into protoporphyrin IX. The polypeptide is Ferrochelatase (Pseudomonas paraeruginosa (strain DSM 24068 / PA7) (Pseudomonas aeruginosa (strain PA7))).